Reading from the N-terminus, the 300-residue chain is UDP-3-O-acyl-N-acetylglucosamine deacetylase (300 aa).

Zn(2+)-binding residues include His78, His237, and Asp241. The active-site Proton donor is the His264.

This sequence belongs to the LpxC family. It depends on Zn(2+) as a cofactor.

It catalyses the reaction a UDP-3-O-[(3R)-3-hydroxyacyl]-N-acetyl-alpha-D-glucosamine + H2O = a UDP-3-O-[(3R)-3-hydroxyacyl]-alpha-D-glucosamine + acetate. The protein operates within glycolipid biosynthesis; lipid IV(A) biosynthesis; lipid IV(A) from (3R)-3-hydroxytetradecanoyl-[acyl-carrier-protein] and UDP-N-acetyl-alpha-D-glucosamine: step 2/6. Functionally, catalyzes the hydrolysis of UDP-3-O-myristoyl-N-acetylglucosamine to form UDP-3-O-myristoylglucosamine and acetate, the committed step in lipid A biosynthesis. This is UDP-3-O-acyl-N-acetylglucosamine deacetylase from Acinetobacter baumannii (strain SDF).